We begin with the raw amino-acid sequence, 90 residues long: WAP four-disulfide core domain protein 12 (90 aa).

A signal peptide spans 1–23; sequence MGSSSFLVLMVSLALVTLVAVEG. The region spanning 27–74 is the WAP domain; that stretch reads GIEKAGVCPADNVRCFKSDPPQCHTDQDCLGERKCCYLHCGFKCVIPV. Cystine bridges form between C34–C62, C41–C66, C49–C61, and C55–C70.

The protein localises to the secreted. In terms of biological role, antibacterial protein. Putative acid-stable proteinase inhibitor. This is WAP four-disulfide core domain protein 12 (WFDC12) from Pongo abelii (Sumatran orangutan).